Here is a 121-residue protein sequence, read N- to C-terminus: MDLIRKIEAQNKKNEAFVFNVGDTVRVVYKIIEGSNERLQSFEGIVISFQNKGIGKTFLIRKISSGIGVEKIFPVYSPIIEKVEVLRRGKVRRAKLYYMRNRIGKAAIKIKERLTIKKVKH.

Belongs to the bacterial ribosomal protein bL19 family.

This protein is located at the 30S-50S ribosomal subunit interface and may play a role in the structure and function of the aminoacyl-tRNA binding site. The protein is Large ribosomal subunit protein bL19 of Borreliella burgdorferi (strain ZS7) (Borrelia burgdorferi).